The following is a 1237-amino-acid chain: GTPase activating protein BUD2 (1237 aa).

The span at 79-110 (GSGKSSISQPPPTTSTRRNLLRKSSNLNSSDQ) shows a compositional bias: low complexity. The disordered stretch occupies residues 79–124 (GSGKSSISQPPPTTSTRRNLLRKSSNLNSSDQSHSKSSEDNEHQPP). Positions 111–121 (SHSKSSEDNEH) are enriched in basic and acidic residues. Residues 381–503 (NVEHPQLYDF…KQIKTTSTIM (123 aa)) enclose the C2 domain. The Ras-GAP domain maps to 637 to 905 (NSQDQAVSNS…PEIYDYFDKL (269 aa)). Disordered stretches follow at residues 721-762 (SIHE…ERER) and 969-1007 (NNNG…PDLD). Over residues 735–754 (DVSDDDDDDDDNSSDDDADY) the composition is skewed to acidic residues. A compositionally biased stretch (basic and acidic residues) spans 986 to 996 (RDMEREQDRSR). A coiled-coil region spans residues 1065-1093 (NITLKDIQKQSTKIMNKIQELEIYLENYE). The segment at 1170-1204 (NGGMGNRNGHDVNGHNNNNNNNNNNTGDGYNETDR) is disordered. The segment covering 1183 to 1199 (GHNNNNNNNNNNTGDGY) has biased composition (low complexity).

Its subcellular location is the cytoplasm. It is found in the cell cortex. It localises to the cell tip. The protein resides in the cell septum. GTPase activating protein (GAP) for RSR1 which is involved in the polarization of yeast and hyphal cells. Directs the site of new daughter cell growth in yeast and hyphal cells. Important for hyphae to maintain linear growth and necessary for hyphal responses to directional cues in the environment (tropisms). Required for correct localization of the septin rings and stabilization of the polarisome at hyphal tips. Involved in cell adhesion. In Candida albicans (strain SC5314 / ATCC MYA-2876) (Yeast), this protein is GTPase activating protein BUD2 (BUD2).